Here is a 401-residue protein sequence, read N- to C-terminus: Imidazolonepropionase (401 aa).

His66 and His68 together coordinate Fe(3+). Residues His66 and His68 each coordinate Zn(2+). Arg75, Tyr138, and His171 together coordinate 4-imidazolone-5-propanoate. Residue Tyr138 participates in N-formimidoyl-L-glutamate binding. Position 236 (His236) interacts with Fe(3+). His236 serves as a coordination point for Zn(2+). Gln239 is a binding site for 4-imidazolone-5-propanoate. Asp311 contacts Fe(3+). Zn(2+) is bound at residue Asp311. Positions 313 and 315 each coordinate N-formimidoyl-L-glutamate. Thr316 lines the 4-imidazolone-5-propanoate pocket.

Belongs to the metallo-dependent hydrolases superfamily. HutI family. Requires Zn(2+) as cofactor. Fe(3+) is required as a cofactor.

It localises to the cytoplasm. The catalysed reaction is 4-imidazolone-5-propanoate + H2O = N-formimidoyl-L-glutamate. It functions in the pathway amino-acid degradation; L-histidine degradation into L-glutamate; N-formimidoyl-L-glutamate from L-histidine: step 3/3. In terms of biological role, catalyzes the hydrolytic cleavage of the carbon-nitrogen bond in imidazolone-5-propanoate to yield N-formimidoyl-L-glutamate. It is the third step in the universal histidine degradation pathway. This is Imidazolonepropionase from Pseudomonas fluorescens (strain ATCC BAA-477 / NRRL B-23932 / Pf-5).